The following is a 519-amino-acid chain: UvrABC system protein C (519 aa).

A GIY-YIG domain is found at 9 to 87 (HLPGCYLFKN…IKKHWPRYNI (79 aa)). Positions 191 to 226 (RELIESMEKDMRELASRQQFEQAMALRDEIAALEYL) constitute a UVR domain.

Belongs to the UvrC family. Interacts with UvrB in an incision complex.

It localises to the cytoplasm. Functionally, the UvrABC repair system catalyzes the recognition and processing of DNA lesions. UvrC both incises the 5' and 3' sides of the lesion. The N-terminal half is responsible for the 3' incision and the C-terminal half is responsible for the 5' incision. The chain is UvrABC system protein C from Methanosarcina barkeri (strain Fusaro / DSM 804).